Reading from the N-terminus, the 759-residue chain is Subtilisin-like serine-protease S (759 aa).

The N-terminal stretch at 1 to 22 (MGSAKILSFTLLLFVGYTLVHG) is a signal peptide. An Inhibitor I9 domain is found at 28 to 105 (YIVYMGDRSH…SVFESKMNKL (78 aa)). Residues 110–613 (SWDFLGLDTV…SGHVNPVASL (504 aa)) form the Peptidase S8 domain. The Charge relay system role is filled by aspartate 139. Asparagine 170 carries an N-linked (GlcNAc...) asparagine glycan. Histidine 215 (charge relay system) is an active-site residue. 2 N-linked (GlcNAc...) asparagine glycosylation sites follow: asparagine 230 and asparagine 388. One can recognise a PA domain in the interval 390-462 (SFCKEHTLDP…MIGQDAVEEL (73 aa)). Residue serine 545 is the Charge relay system of the active site. N-linked (GlcNAc...) asparagine glycans are attached at residues asparagine 593, asparagine 642, and asparagine 671.

The protein belongs to the peptidase S8 family.

The protein localises to the secreted. It is found in the extracellular space. Its subcellular location is the apoplast. Functionally, required for arbuscular mycorrhiza (AM) development during AM symbiosis with AM fungi (e.g. Glomeromycota intraradices). This is Subtilisin-like serine-protease S from Lotus japonicus (Lotus corniculatus var. japonicus).